Here is a 125-residue protein sequence, read N- to C-terminus: uncharacterized protein (125 aa).

This sequence belongs to the asfivirus H124R family.

The protein resides in the virion. This is an uncharacterized protein from Ornithodoros (relapsing fever ticks).